We begin with the raw amino-acid sequence, 420 residues long: Membrane protein UL43 homolog (420 aa).

Transmembrane regions (helical) follow at residues 58–78 (IFSI…IQFI), 81–101 (KIIY…AFIV), 114–134 (IGKP…TLIT), 157–177 (LMCF…CLAT), 181–201 (LTWK…ISAP), 203–223 (GNIS…INVV), 278–298 (QIPM…VIAL), 312–332 (TDML…IFIP), 343–363 (IIIL…FGLV), 364–384 (LGPT…CINI), and 399–419 (VVKS…LVAL).

It belongs to the alphaherpesvirinae HHV-1 UL43 family.

The protein resides in the host membrane. The chain is Membrane protein UL43 homolog (MDV056) from Gallus gallus (Chicken).